Reading from the N-terminus, the 487-residue chain is Glutamyl-tRNA(Gln) amidotransferase subunit A (487 aa).

Active-site charge relay system residues include lysine 79 and serine 154. Catalysis depends on serine 178, which acts as the Acyl-ester intermediate.

This sequence belongs to the amidase family. GatA subfamily. In terms of assembly, heterotrimer of A, B and C subunits.

The enzyme catalyses L-glutamyl-tRNA(Gln) + L-glutamine + ATP + H2O = L-glutaminyl-tRNA(Gln) + L-glutamate + ADP + phosphate + H(+). Functionally, allows the formation of correctly charged Gln-tRNA(Gln) through the transamidation of misacylated Glu-tRNA(Gln) in organisms which lack glutaminyl-tRNA synthetase. The reaction takes place in the presence of glutamine and ATP through an activated gamma-phospho-Glu-tRNA(Gln). The protein is Glutamyl-tRNA(Gln) amidotransferase subunit A of Moorella thermoacetica (strain ATCC 39073 / JCM 9320).